A 137-amino-acid chain; its full sequence is Large ribosomal subunit protein uL22 (137 aa).

Belongs to the universal ribosomal protein uL22 family. In terms of assembly, part of the 50S ribosomal subunit.

This protein binds specifically to 23S rRNA; its binding is stimulated by other ribosomal proteins, e.g. L4, L17, and L20. It is important during the early stages of 50S assembly. It makes multiple contacts with different domains of the 23S rRNA in the assembled 50S subunit and ribosome. In terms of biological role, the globular domain of the protein is located near the polypeptide exit tunnel on the outside of the subunit, while an extended beta-hairpin is found that lines the wall of the exit tunnel in the center of the 70S ribosome. The sequence is that of Large ribosomal subunit protein uL22 from Flavobacterium psychrophilum (strain ATCC 49511 / DSM 21280 / CIP 103535 / JIP02/86).